The following is a 158-amino-acid chain: SsrA-binding protein (158 aa).

Basic and acidic residues predominate over residues 133-147 (KRQALRERQDNREAQ). The segment at 133 to 158 (KRQALRERQDNREAQRAMASRKHLGE) is disordered.

Belongs to the SmpB family.

It is found in the cytoplasm. Its function is as follows. Required for rescue of stalled ribosomes mediated by trans-translation. Binds to transfer-messenger RNA (tmRNA), required for stable association of tmRNA with ribosomes. tmRNA and SmpB together mimic tRNA shape, replacing the anticodon stem-loop with SmpB. tmRNA is encoded by the ssrA gene; the 2 termini fold to resemble tRNA(Ala) and it encodes a 'tag peptide', a short internal open reading frame. During trans-translation Ala-aminoacylated tmRNA acts like a tRNA, entering the A-site of stalled ribosomes, displacing the stalled mRNA. The ribosome then switches to translate the ORF on the tmRNA; the nascent peptide is terminated with the 'tag peptide' encoded by the tmRNA and targeted for degradation. The ribosome is freed to recommence translation, which seems to be the essential function of trans-translation. This Leifsonia xyli subsp. xyli (strain CTCB07) protein is SsrA-binding protein.